Reading from the N-terminus, the 83-residue chain is Mitochondrial import inner membrane translocase subunit Tim8 (83 aa).

The short motif at cysteine 35 to cysteine 60 is the Twin CX3C motif element. 2 disulfides stabilise this stretch: cysteine 35–cysteine 60 and cysteine 39–cysteine 56.

The protein belongs to the small Tim family. As to quaternary structure, heterohexamer; composed of 3 copies of ddp-1/tim-8 and 3 copies of tin-13/tim-13, named soluble 70 kDa complex. Associates with the TIM22 complex, whose core is composed of tim-22.

Its subcellular location is the mitochondrion inner membrane. In terms of biological role, mitochondrial intermembrane chaperone that participates in the import and insertion of some multi-pass transmembrane proteins into the mitochondrial inner membrane. Also required for the transfer of beta-barrel precursors from the TOM complex to the sorting and assembly machinery (SAM complex) of the outer membrane. Acts as a chaperone-like protein that protects the hydrophobic precursors from aggregation and guide them through the mitochondrial intermembrane space. The ddp-1/tim-8-tim-13 complex mediates the import of some proteins while the predominant tim-9/tin-9.1-tim-10/tin-10 70 kDa complex mediates the import of much more proteins. In Caenorhabditis elegans, this protein is Mitochondrial import inner membrane translocase subunit Tim8.